The sequence spans 127 residues: UPF0102 protein Reut_A3265 (127 aa).

It belongs to the UPF0102 family.

The chain is UPF0102 protein Reut_A3265 from Cupriavidus pinatubonensis (strain JMP 134 / LMG 1197) (Cupriavidus necator (strain JMP 134)).